Here is a 1194-residue protein sequence, read N- to C-terminus: Rho-associated protein kinase let-502 (1194 aa).

The region spanning Phe68–Phe330 is the Protein kinase domain. ATP is bound by residues Ile74–Val82 and Lys97. The active-site Proton acceptor is the Asp190. The region spanning Lys331–Leu402 is the AGC-kinase C-terminal domain. Coiled-coil stretches lie at residues Glu436–Arg844 and Gly875–Gln933. The RhoBD domain maps to Glu784–Pro846. The region spanning Ile961–Ser1171 is the PH domain. Residues Arg1085 to Cys1138 form a Phorbol-ester/DAG-type zinc finger.

Belongs to the protein kinase superfamily. AGC Ser/Thr protein kinase family. Interacts with rho-1. The cofactor is Mg(2+).

It localises to the cytoplasm. The protein resides in the cytoskeleton. The protein localises to the cleavage furrow. It carries out the reaction L-seryl-[protein] + ATP = O-phospho-L-seryl-[protein] + ADP + H(+). The catalysed reaction is L-threonyl-[protein] + ATP = O-phospho-L-threonyl-[protein] + ADP + H(+). Its activity is regulated as follows. Activated by rho-1 binding. In terms of biological role, negatively regulates mel-11 to relieve the inhibition of mlc-4, allowing contraction of the circumferentially oriented microfilaments in epidermal cells and thereby regulating myosin II contractility during spermathecal contraction, cleavage furrow contraction in early embryos, and embryonic elongation and morphogenesis. Required for P-cell migration. May also play a role in oocyte cellularization. The polypeptide is Rho-associated protein kinase let-502 (Caenorhabditis briggsae).